Consider the following 207-residue polypeptide: Zinc finger protein 487 (207 aa).

The KRAB domain occupies 1–43 (MLENYSLLLSVGYCITKPEVVCKLEHGQVLWILEEESPSQSHL). A C2H2-type; atypical zinc finger spans residues 177-202 (KQCFEYNQCGKAFHEEAACSTHKRVC).

This sequence belongs to the krueppel C2H2-type zinc-finger protein family.

The protein resides in the nucleus. Functionally, may be involved in transcriptional regulation. The protein is Zinc finger protein 487 (ZNF487) of Homo sapiens (Human).